Here is a 179-residue protein sequence, read N- to C-terminus: Transcriptional regulator ICP22 homolog (179 aa).

Residues 1–12 are compositionally biased toward basic and acidic residues; that stretch reads MSRDRDRARPDT. Positions 1–40 are disordered; it reads MSRDRDRARPDTRLSSSDNESDDEDYQLPHSHPEYGSDSS.

This sequence belongs to the herpesviridae ICP22 family.

This chain is Transcriptional regulator ICP22 homolog (MDV088), found in Gallid herpesvirus 2 (strain Chicken/Md5/ATCC VR-987) (GaHV-2).